The primary structure comprises 275 residues: Ribosomal RNA small subunit methyltransferase A (275 aa).

Asparagine 21, leucine 23, glycine 48, glutamate 69, aspartate 94, and asparagine 115 together coordinate S-adenosyl-L-methionine.

This sequence belongs to the class I-like SAM-binding methyltransferase superfamily. rRNA adenine N(6)-methyltransferase family. RsmA subfamily.

It localises to the cytoplasm. It carries out the reaction adenosine(1518)/adenosine(1519) in 16S rRNA + 4 S-adenosyl-L-methionine = N(6)-dimethyladenosine(1518)/N(6)-dimethyladenosine(1519) in 16S rRNA + 4 S-adenosyl-L-homocysteine + 4 H(+). Functionally, specifically dimethylates two adjacent adenosines (A1518 and A1519) in the loop of a conserved hairpin near the 3'-end of 16S rRNA in the 30S particle. May play a critical role in biogenesis of 30S subunits. The protein is Ribosomal RNA small subunit methyltransferase A of Clostridium botulinum (strain Loch Maree / Type A3).